We begin with the raw amino-acid sequence, 202 residues long: Glycerol-3-phosphate acyltransferase (202 aa).

4 helical membrane passes run 2–22 (ANLL…AVVV), 82–102 (DTGL…PVFH), 119–139 (AIDP…AFFF), and 158–178 (VLMN…VLLI).

Belongs to the PlsY family. In terms of assembly, probably interacts with PlsX.

It is found in the cell inner membrane. It carries out the reaction an acyl phosphate + sn-glycerol 3-phosphate = a 1-acyl-sn-glycero-3-phosphate + phosphate. The protein operates within lipid metabolism; phospholipid metabolism. In terms of biological role, catalyzes the transfer of an acyl group from acyl-phosphate (acyl-PO(4)) to glycerol-3-phosphate (G3P) to form lysophosphatidic acid (LPA). This enzyme utilizes acyl-phosphate as fatty acyl donor, but not acyl-CoA or acyl-ACP. This is Glycerol-3-phosphate acyltransferase from Cupriavidus taiwanensis (strain DSM 17343 / BCRC 17206 / CCUG 44338 / CIP 107171 / LMG 19424 / R1) (Ralstonia taiwanensis (strain LMG 19424)).